Here is a 121-residue protein sequence, read N- to C-terminus: Large ribosomal subunit protein uL14 (121 aa).

This sequence belongs to the universal ribosomal protein uL14 family. In terms of assembly, part of the 50S ribosomal subunit. Forms a cluster with proteins L3 and L19. In the 70S ribosome, L14 and L19 interact and together make contacts with the 16S rRNA in bridges B5 and B8.

Binds to 23S rRNA. Forms part of two intersubunit bridges in the 70S ribosome. The protein is Large ribosomal subunit protein uL14 of Synechococcus sp. (strain CC9605).